Consider the following 270-residue polypeptide: 27 kDa core protein (270 aa).

This sequence belongs to the chordopoxvirinae D3 family.

Its subcellular location is the virion. In terms of biological role, late protein which is part of a large complex required for early virion morphogenesis. This complex participates in the formation of virosomes and the incorporation of virosomal contents into nascent immature virions. The protein is 27 kDa core protein of Vertebrata (FPV).